The primary structure comprises 449 residues: 23S rRNA (uracil(1939)-C(5))-methyltransferase RlmD (449 aa).

One can recognise a TRAM domain in the interval 12–70 (SKQLSAKQSFSVHQLDHLGAGIAQHQGKVVFIPGALPNETVQAQLTEQKKNYARAKLIK). 4 residues coordinate [4Fe-4S] cluster: cysteine 83, cysteine 89, cysteine 92, and cysteine 170. S-adenosyl-L-methionine is bound by residues glutamine 282, phenylalanine 311, asparagine 316, glutamate 332, aspartate 359, and aspartate 379. The active-site Nucleophile is cysteine 405.

Belongs to the class I-like SAM-binding methyltransferase superfamily. RNA M5U methyltransferase family. RlmD subfamily.

It carries out the reaction uridine(1939) in 23S rRNA + S-adenosyl-L-methionine = 5-methyluridine(1939) in 23S rRNA + S-adenosyl-L-homocysteine + H(+). Its function is as follows. Catalyzes the formation of 5-methyl-uridine at position 1939 (m5U1939) in 23S rRNA. The protein is 23S rRNA (uracil(1939)-C(5))-methyltransferase RlmD of Shewanella sp. (strain ANA-3).